Here is a 328-residue protein sequence, read N- to C-terminus: Spermatogenesis- and oogenesis-specific basic helix-loop-helix-containing protein 1 (328 aa).

A bHLH domain is found at 53–104; the sequence is SCLRRNVISERERRKRMSLSCERLRALLPQFDGRREDMASVLEMSVQFLRLA. The tract at residues 290–328 is disordered; it reads EAGSALGSDVDDGTSFLLTAGPSSWPGEWGPGFRAGPPA. Positions 310-321 are enriched in low complexity; sequence GPSSWPGEWGPG.

As to quaternary structure, forms both hetero- and homodimers with SOHLH2.

It localises to the cytoplasm. The protein localises to the nucleus. Its function is as follows. Transcription regulator of both male and female germline differentiation. Suppresses genes involved in spermatogonial stem cells maintenance, and induces genes important for spermatogonial differentiation. Coordinates oocyte differentiation without affecting meiosis I. This is Spermatogenesis- and oogenesis-specific basic helix-loop-helix-containing protein 1 (SOHLH1) from Homo sapiens (Human).